The primary structure comprises 241 residues: Uridylate kinase (241 aa).

15 to 18 (KLSG) provides a ligand contact to ATP. The involved in allosteric activation by GTP stretch occupies residues 23 to 28 (GSEGFG). Glycine 57 lines the UMP pocket. ATP is bound by residues glycine 58 and arginine 62. UMP contacts are provided by residues aspartate 77 and 138 to 145 (TGNPFCTT). ATP contacts are provided by threonine 165, tyrosine 171, and aspartate 174.

The protein belongs to the UMP kinase family. As to quaternary structure, homohexamer.

The protein localises to the cytoplasm. It catalyses the reaction UMP + ATP = UDP + ADP. Its pathway is pyrimidine metabolism; CTP biosynthesis via de novo pathway; UDP from UMP (UMPK route): step 1/1. With respect to regulation, allosterically activated by GTP. Inhibited by UTP. Functionally, catalyzes the reversible phosphorylation of UMP to UDP. In Shewanella amazonensis (strain ATCC BAA-1098 / SB2B), this protein is Uridylate kinase.